The sequence spans 458 residues: UPF0210 protein MMP1427 (458 aa).

It belongs to the UPF0210 family.

The polypeptide is UPF0210 protein MMP1427 (Methanococcus maripaludis (strain DSM 14266 / JCM 13030 / NBRC 101832 / S2 / LL)).